We begin with the raw amino-acid sequence, 405 residues long: Divinyl chlorophyllide a 8-vinyl-reductase, chloroplastic (405 aa).

The transit peptide at 1–58 directs the protein to the chloroplast; sequence MAALLLSSHLTAASSSSTTSPTARPAPSFVSFRAANAAPKGARRGWPFLASSVEPPPA.

It is found in the plastid. It localises to the chloroplast. It catalyses the reaction protochlorophyllide a + NADP(+) = 3,8-divinyl protochlorophyllide a + NADPH + H(+). It participates in porphyrin-containing compound metabolism; chlorophyll biosynthesis. Functionally, catalyzes the conversion of divinyl chlorophyllide to monovinyl chlorophyllide. Reduces the 8-vinyl group of the tetrapyrrole to an ethyl group using NADPH as the reductant. Can use (3,8-divinyl)-chlorophyllide a (DV-Chlidea) &gt; (3,8-divinyl)-chlorophyll a (DV-Chla) &gt; (3,8-divinyl)-protochlorophyllide a (DV-Pchlidea) &gt; (3,8-divinyl)-magnesium-protoporphyrin IX monomethyl ester (DV-MPE) &gt; (3,8-divinyl)-magnesium-protoporphyrin IX (DV-Mg-Proto) as substrates. This Oryza sativa subsp. indica (Rice) protein is Divinyl chlorophyllide a 8-vinyl-reductase, chloroplastic (DVR).